A 134-amino-acid polypeptide reads, in one-letter code: Phosphoribosyl-AMP cyclohydrolase (134 aa).

D80 lines the Mg(2+) pocket. Position 81 (C81) interacts with Zn(2+). Positions 82 and 84 each coordinate Mg(2+). Zn(2+) contacts are provided by C98 and C105.

Belongs to the PRA-CH family. Homodimer. The cofactor is Mg(2+). It depends on Zn(2+) as a cofactor.

Its subcellular location is the cytoplasm. The catalysed reaction is 1-(5-phospho-beta-D-ribosyl)-5'-AMP + H2O = 1-(5-phospho-beta-D-ribosyl)-5-[(5-phospho-beta-D-ribosylamino)methylideneamino]imidazole-4-carboxamide. The protein operates within amino-acid biosynthesis; L-histidine biosynthesis; L-histidine from 5-phospho-alpha-D-ribose 1-diphosphate: step 3/9. Catalyzes the hydrolysis of the adenine ring of phosphoribosyl-AMP. The chain is Phosphoribosyl-AMP cyclohydrolase from Bordetella avium (strain 197N).